Consider the following 377-residue polypeptide: Ribosomal RNA large subunit methyltransferase G (377 aa).

Belongs to the methyltransferase superfamily. RlmG family.

The protein localises to the cytoplasm. The enzyme catalyses guanosine(1835) in 23S rRNA + S-adenosyl-L-methionine = N(2)-methylguanosine(1835) in 23S rRNA + S-adenosyl-L-homocysteine + H(+). Its function is as follows. Specifically methylates the guanine in position 1835 (m2G1835) of 23S rRNA. This is Ribosomal RNA large subunit methyltransferase G from Shewanella sp. (strain ANA-3).